The chain runs to 306 residues: D-alanine--D-alanine ligase (306 aa).

In terms of domain architecture, ATP-grasp spans K107–E303. Residue I134–T189 participates in ATP binding. Mg(2+)-binding residues include D257, E270, and N272.

This sequence belongs to the D-alanine--D-alanine ligase family. Mg(2+) serves as cofactor. It depends on Mn(2+) as a cofactor.

It is found in the cytoplasm. It catalyses the reaction 2 D-alanine + ATP = D-alanyl-D-alanine + ADP + phosphate + H(+). Its pathway is cell wall biogenesis; peptidoglycan biosynthesis. Cell wall formation. This chain is D-alanine--D-alanine ligase, found in Pseudoalteromonas translucida (strain TAC 125).